A 319-amino-acid chain; its full sequence is 12-(S)-hydroxy-5,8,10,14-eicosatetraenoic acid receptor (319 aa).

Residues 1 to 16 (MERTNCSAASTVVETA) lie on the Extracellular side of the membrane. N-linked (GlcNAc...) asparagine glycosylation is present at asparagine 5. The helical transmembrane segment at 17–37 (VGTMLTLECVLGLMGNAVALW) threads the bilayer. The Cytoplasmic segment spans residues 38–52 (TFFYRLKVWKPYAVY). A helical transmembrane segment spans residues 53-73 (LFNLVVADLLLATSLPFFAAF). At 74–91 (YLKGKTWKLGHMPCQVLL) the chain is on the extracellular side. The chain crosses the membrane as a helical span at residues 92–110 (FLLAFSRGVGVAFLTTVAL). The Cytoplasmic segment spans residues 111-131 (DRYLRVVHPRLRVNLLSLRAA). Residues 132–152 (WGISSLIWLLMVVLTPQNLLT) form a helical membrane-spanning segment. At 153–180 (CRTTQNSTECPSFYPTGGAKAIATCQEV) the chain is on the extracellular side. A helical transmembrane segment spans residues 181–201 (LFFLQVLLPFGLISFCNSGLI). Residues 202 to 219 (RTLQKRLRESDKQPRIRR) are Cytoplasmic-facing. The helical transmembrane segment at 220–240 (ARVLVAIVLLLFGLCFLPSVL) threads the bilayer. Over 241–265 (TRVLVHIFQEFKSCSVQQAIVRASD) the chain is Extracellular. Residues 266-284 (IAGSLTCLHSTLSPAIYCF) form a helical membrane-spanning segment. Over 285-319 (SNPAFTHSYRKVLKSLRGRRKAAESPSDNLRDSYS) the chain is Cytoplasmic.

This sequence belongs to the G-protein coupled receptor 1 family. As to quaternary structure, interacts with KRAS; in a farnesylation-dependent manner.

It localises to the cell membrane. High-affinity receptor for 12-(S)-hydroxy-5,8,10,14-eicosatetraenoic acid (12-S-HETE), with much lower affinities for other HETE isomers. 12-S-HETE is a eicosanoid, a 12-lipoxygenase (ALOX12) metabolite of arachidonic acid, involved in many physiologic and pathologic processes, such as cell growth, adhesion, inflammation and cancer promotion. 12-S-HETE-binding leads to activation of ERK1/2 (MAPK3/MAPK1), MEK, and NF-kappa-B pathways and leads to cell growth. Plays a crucial role for proliferation, survival and macropinocytosis of KRAS-dependent cancer cells by mediating the translocation of KRAS from the endoplasmic reticulum to the plasma membrane (PM) and its association with the PM. Contributes to enhanced immune responses by inducing dendrite protrusion of small intestinal CX3CR1(+) phagocytes for the uptake of luminal antigens. Also acts as a key receptor for 12-(S)-HETE-mediated liver ischemia reperfusion injury. Functionally, proton-sensing G protein-coupled receptor. The chain is 12-(S)-hydroxy-5,8,10,14-eicosatetraenoic acid receptor (Gpr31) from Mus musculus (Mouse).